The sequence spans 420 residues: Tyrosine--tRNA ligase (420 aa).

Tyr-38 contributes to the L-tyrosine binding site. Positions 43-52 (PTGDSLHIGH) match the 'HIGH' region motif. Positions 169 and 173 each coordinate L-tyrosine. The 'KMSKS' region signature appears at 231–235 (KFGKS). Lys-234 serves as a coordination point for ATP. Residues 353–419 (KNIVEFLVET…GKRKYTLVKI (67 aa)) enclose the S4 RNA-binding domain.

This sequence belongs to the class-I aminoacyl-tRNA synthetase family. TyrS type 1 subfamily. In terms of assembly, homodimer.

It is found in the cytoplasm. The catalysed reaction is tRNA(Tyr) + L-tyrosine + ATP = L-tyrosyl-tRNA(Tyr) + AMP + diphosphate + H(+). Its function is as follows. Catalyzes the attachment of tyrosine to tRNA(Tyr) in a two-step reaction: tyrosine is first activated by ATP to form Tyr-AMP and then transferred to the acceptor end of tRNA(Tyr). This Lactobacillus johnsonii (strain CNCM I-12250 / La1 / NCC 533) protein is Tyrosine--tRNA ligase.